The primary structure comprises 431 residues: Galanin-like G-protein coupled receptor npr-9 (431 aa).

The Extracellular portion of the chain corresponds to 1–34 (MEFENLTKEEMEQLQKIYDDTISFERKIGIIIPT). A glycan (N-linked (GlcNAc...) asparagine) is linked at Asn5. Residues 35 to 55 (IFAVIILVGLVGNALVVIVAF) form a helical membrane-spanning segment. The Cytoplasmic portion of the chain corresponds to 56 to 66 (GRQMRNSTNTL). Residues 67-87 (IIGLAISDLMFLLLCVPFTAV) traverse the membrane as a helical segment. Topologically, residues 88–101 (DYAAPTWIFPEWTC) are extracellular. A disulfide bond links Cys101 and Cys182. A helical transmembrane segment spans residues 102 to 124 (SMINFFQHTSAYCSVWTLTLMAL). Residues 125-143 (DRYLAVVYPVESMTLRTPR) lie on the Cytoplasmic side of the membrane. A helical transmembrane segment spans residues 144-164 (NTVIALCFIYIIIIASQIPVG). Topologically, residues 165–203 (RMHGIYVYDFIMEKRSTCAILTIATAEATPTMARTYFMT) are extracellular. Residues 204–224 (FNVFGYVLPLGISVVLYGLML) traverse the membrane as a helical segment. Residues 225–268 (RKLWDMPRPGNSQSVGGRNLTNRDSGSSIRRRPEATAAKRKVTR) lie on the Cytoplasmic side of the membrane. Residues 235–252 (NSQSVGGRNLTNRDSGSS) are compositionally biased toward polar residues. A disordered region spans residues 235 to 257 (NSQSVGGRNLTNRDSGSSIRRRP). A helical transmembrane segment spans residues 269 to 289 (LVLCVLITWALCWLPLNVCFF). Topologically, residues 290–298 (MSGLAYPEP) are extracellular. Residues 299–319 (LVISHGVIMVIVQIASQVLAY) traverse the membrane as a helical segment. The Cytoplasmic portion of the chain corresponds to 320–431 (TNSCLNPILY…RSKSTRSYNL (112 aa)). Over residues 393–414 (SLLKDNSSSATSVQPLRTSIQA) the composition is skewed to polar residues. The tract at residues 393–431 (SLLKDNSSSATSVQPLRTSIQAKKTKNIGRSKSTRSYNL) is disordered. The segment covering 415–425 (KKTKNIGRSKS) has biased composition (basic residues).

It belongs to the G-protein coupled receptor 1 family. In terms of tissue distribution, exclusively expressed in the AIB interneuron.

Its subcellular location is the cell membrane. Its function is as follows. Neuropeptide that controls movement such as roaming, foraging and backwards locomotion or 'reversals' in response to environmental cues such as food availability or volatile odorants such as octanol. Antagonizes AIB interneuron activity to control bacterial colonization and may negatively regulate the expression of immunity-related genes such as pqm-1 and dod-22 in response to infection by P.aeruginosa. This is Galanin-like G-protein coupled receptor npr-9 from Caenorhabditis elegans.